A 208-amino-acid chain; its full sequence is Recombination protein RecR (208 aa).

The segment at 57–72 adopts a C4-type zinc-finger fold; it reads CALCNTLTEQEVCVTC. The region spanning 80 to 187 is the Toprim domain; the sequence is SKLCVVETPA…QVTRLARGVP (108 aa).

The protein belongs to the RecR family.

Its function is as follows. May play a role in DNA repair. It seems to be involved in an RecBC-independent recombinational process of DNA repair. It may act with RecF and RecO. This Polaromonas naphthalenivorans (strain CJ2) protein is Recombination protein RecR.